Here is a 437-residue protein sequence, read N- to C-terminus: Vacuolar protein sorting-associated protein 4A (437 aa).

Positions 2 to 80 (TTSTLQKAID…KDYLRNKEKH (79 aa)) constitute an MIT domain. Position 8 is an N6-acetyllysine (Lys8). Residues 15-37 (KATEEDKAKNYEEALRLYQHAVE) adopt a coiled-coil conformation. The disordered stretch occupies residues 75–106 (RNKEKHGKKPVKENQSEGKGSDSDSEGDNPEK). The segment covering 84 to 96 (PVKENQSEGKGSD) has biased composition (basic and acidic residues). Phosphoserine occurs at positions 95 and 97. 167–174 (GPPGTGKS) contacts ATP.

This sequence belongs to the AAA ATPase family. In terms of assembly, proposed to be monomeric or homodimeric in nucleotide-free form and to oligomerize upon binding to ATP to form two stacked hexameric or heptameric rings with a central pore through which ESCRT-III substrates are translocated in an ATP-dependent manner. Interacts with CHMP1A, CHMP1B, CHMP2A, CHMP2B, CHMP3, CHMP4A, CHMP4B, CHMP4C and CHMP6. Interacts with VPS4B; the interaction suggests a heteromeric assembly with VPS4B. Interacts with SPAST. Interacts with IST1. Interacts with ZFYVE19/ANCHR; leading to retain it at midbody. In terms of tissue distribution, highly expressed in testis and moderately in heart and brain. Not detected in spleen, lung, liver, skeletal muscle or kidney.

The protein localises to the late endosome membrane. The protein resides in the midbody. It localises to the cytoplasm. It is found in the cytoskeleton. Its subcellular location is the spindle. It catalyses the reaction ATP + H2O = ADP + phosphate + H(+). Functionally, involved in late steps of the endosomal multivesicular bodies (MVB) pathway. Recognizes membrane-associated ESCRT-III assemblies and catalyzes their disassembly, possibly in combination with membrane fission. Redistributes the ESCRT-III components to the cytoplasm for further rounds of MVB sorting. MVBs contain intraluminal vesicles (ILVs) that are generated by invagination and scission from the limiting membrane of the endosome and mostly are delivered to lysosomes enabling degradation of membrane proteins, such as stimulated growth factor receptors, lysosomal enzymes and lipids. It is required for proper accomplishment of various processes including the regulation of endosome size, primary cilium organization, mitotic spindle organization and chromosome segregation, and nuclear envelope sealing and spindle disassembly during anaphase. In conjunction with the ESCRT machinery also appears to function in topologically equivalent membrane fission events, such as the terminal stages of cytokinesis. Involved in cytokinesis: retained at the midbody by ZFYVE19/ANCHR and CHMP4C until abscission checkpoint signaling is terminated at late cytokinesis. It is then released following dephosphorylation of CHMP4C, leading to abscission. VPS4A/B are required for the exosomal release of SDCBP, CD63 and syndecan. Critical for normal erythroblast cytokinesis and correct erythropoiesis. This is Vacuolar protein sorting-associated protein 4A from Mus musculus (Mouse).